Consider the following 217-residue polypeptide: Vesicle transport through interaction with t-SNAREs homolog 1A (217 aa).

Over 1 to 192 (MDVFERTEQN…TGIARRLATN (192 aa)) the chain is Cytoplasmic. The stretch at 36-97 (AVREVENDID…AQLQSSNQTN (62 aa)) forms a coiled coil. The segment at 90–109 (LQSSNQTNSNPWSNAPDDYQ) is disordered. Residues 123–185 (SNMLDSTSDR…KSARKIMTGI (63 aa)) form the t-SNARE coiled-coil homology domain. Residues 193 to 213 (KVILSIIILLLMGIIALIICL) traverse the membrane as a helical; Anchor for type IV membrane protein segment. The Vesicular portion of the chain corresponds to 214 to 217 (KWLR).

It belongs to the VTI1 family. As to quaternary structure, component of the SNARE complex composed of syn7A, syn8A, vamp7A and vti1A.

It localises to the membrane. Its subcellular location is the cytoplasmic vesicle. It is found in the secretory vesicle membrane. The protein resides in the clathrin-coated vesicle membrane. The protein localises to the endosome membrane. It localises to the endoplasmic reticulum membrane. Functionally, V-SNARE that mediates vesicle transport pathways through interactions with t-SNAREs on the target membrane. These interactions are proposed to mediate aspects of the specificity of vesicle trafficking and to promote fusion of the lipid bilayers. This is Vesicle transport through interaction with t-SNAREs homolog 1A from Dictyostelium discoideum (Social amoeba).